The chain runs to 84 residues: Large ribosomal subunit protein bL27 (84 aa).

The segment at 1 to 22 (MAHKKAGGSTRNGRDSESKRLG) is disordered.

It belongs to the bacterial ribosomal protein bL27 family.

In Shewanella baltica (strain OS223), this protein is Large ribosomal subunit protein bL27.